Here is a 1003-residue protein sequence, read N- to C-terminus: Helicase MOV-10 (1003 aa).

Lys148 is subject to N6-acetyllysine. Phosphothreonine occurs at positions 160 and 254. Phosphoserine is present on Ser432. 524 to 531 (GPPGTGKT) lines the ATP pocket. The DEAG box signature appears at 645–648 (DEAG). The tract at residues 921–965 (NPLLLGHDPDWKVFLEFCKENGGYTGCPFPAKLDLQQGQNLLQGL) is interaction with AGO2 and APOBEC3G. The tract at residues 966–1003 (SKLSPSTSGPHSHDYLPQEREGEGGLSLQVEPEWRNEL) is disordered. Phosphoserine occurs at positions 969 and 977. Residues 976-988 (HSHDYLPQEREGE) are compositionally biased toward basic and acidic residues.

This sequence belongs to the DNA2/NAM7 helicase family. SDE3 subfamily. In terms of assembly, interacts with DICER1, AGO2, TARBP2, EIF6 and RPL7A (60S ribosome subunit); they form a large RNA-induced silencing complex (RISC). Interacts with APOBEC3G in an RNA-dependent manner. Interacts with TRIM71 (via NHL repeats) in an RNA-dependent manner. Interacts with both protein products of LIRE1, ORF1p and ORF2p. Interacts with TUT4 and, to a lesser extent, TUT7; the interactions are RNA-dependent. Interacts with AGO2, TNRC6B and UPF1; the interactions are direct and RNA-dependent. Interacts with FMR1; this interaction is direct, occurs in an RNA-dependent manner on polysomes and induces association of MOV10 with RNAs. Interacts with SHFL; the interaction increases in presence of RNA. Interacts with DHX34; the interaction is RNA-independent. Interacts with IKBKE. Interacts with RBM46. As to quaternary structure, (Microbial infection) Interacts with the human hepatitis delta virus (HDV) antigen HDAg. (Microbial infection) Interacts with HIV-1 protein GAG. In terms of processing, ubiquitinated by the DCX(DCAF12) complex that specifically recognizes the glutamate-leucine (Glu-Leu) degron at the C-terminus, leading to its degradation. (Microbial infection) Cleaved and targeted for degradation by picornavirus proteases.

The protein localises to the cytoplasm. Its subcellular location is the P-body. It localises to the cytoplasmic ribonucleoprotein granule. The protein resides in the stress granule. It is found in the nucleus. It carries out the reaction ATP + H2O = ADP + phosphate + H(+). Its function is as follows. 5' to 3' RNA helicase that is involved in a number of cellular roles ranging from mRNA metabolism and translation, modulation of viral infectivity, inhibition of retrotransposition, or regulation of synaptic transmission. Plays an important role in innate antiviral immunity by promoting type I interferon production. Mechanistically, specifically uses IKKepsilon/IKBKE as the mediator kinase for IRF3 activation. Blocks HIV-1 virus replication at a post-entry step. Counteracts HIV-1 Vif-mediated degradation of APOBEC3G through its helicase activity by interfering with the ubiquitin-proteasome pathway. Also inhibits hepatitis B virus/HBV replication by interacting with HBV RNA and thereby inhibiting the early step of viral reverse transcription. Contributes to UPF1 mRNA target degradation by translocation along 3' UTRs. Required for microRNA (miRNA)-mediated gene silencing by the RNA-induced silencing complex (RISC). Required for both miRNA-mediated translational repression and miRNA-mediated cleavage of complementary mRNAs by RISC. In cooperation with FMR1, regulates miRNA-mediated translational repression by AGO2. Restricts retrotransposition of long interspersed element-1 (LINE-1) in cooperation with TUT4 and TUT7 counteracting the RNA chaperonne activity of L1RE1. Facilitates LINE-1 uridylation by TUT4 and TUT7. Required for embryonic viability and for normal central nervous system development and function. Plays two critical roles in early brain development: suppresses retroelements in the nucleus by directly inhibiting cDNA synthesis, while regulates cytoskeletal mRNAs to influence neurite outgrowth in the cytosol. May function as a messenger ribonucleoprotein (mRNP) clearance factor. In terms of biological role, (Microbial infection) Required for RNA-directed transcription and replication of the human hepatitis delta virus (HDV). Interacts with small capped HDV RNAs derived from genomic hairpin structures that mark the initiation sites of RNA-dependent HDV RNA transcription. The protein is Helicase MOV-10 of Homo sapiens (Human).